The primary structure comprises 639 residues: Protein phosphatase EYA4 (639 aa).

An N-acetylmethionine modification is found at Met1. Disordered stretches follow at residues 1-72 (MEDS…GGEN), 210-232 (QTQS…PQPG), and 300-368 (ADGT…DSDL). A Glycyl lysine isopeptide (Lys-Gly) (interchain with G-Cter in SUMO2) cross-link involves residue Lys14. Over residues 18–30 (ESDVSQSQNSRSM) the composition is skewed to polar residues. A Glycyl lysine isopeptide (Lys-Gly) (interchain with G-Cter in SUMO2) cross-link involves residue Lys52. A compositionally biased stretch (low complexity) spans 56–66 (SNLSSTSVTTN). A compositionally biased stretch (polar residues) spans 300-334 (ADGTPSSTSTYQLQESLPGLTNQPGEFDTMQSPST). Residue Ser361 is modified to Phosphoserine. The Nucleophile role is filled by Asp375. Asp375, Asp377, and Asp603 together coordinate Mg(2+). Asp377 acts as the Proton donor in catalysis.

It belongs to the HAD-like hydrolase superfamily. EYA family. As to quaternary structure, interacts with SIX3; translocates EYA4 from the cytoplasm to the nucleus and promotes activation of their target genes. Requires Mg(2+) as cofactor. As to expression, highly expressed in heart and skeletal muscle.

It is found in the cytoplasm. The protein localises to the nucleus. It catalyses the reaction O-phospho-L-tyrosyl-[protein] + H2O = L-tyrosyl-[protein] + phosphate. Its function is as follows. Tyrosine phosphatase that specifically dephosphorylates 'Tyr-142' of histone H2AX (H2AXY142ph). 'Tyr-142' phosphorylation of histone H2AX plays a central role in DNA repair and acts as a mark that distinguishes between apoptotic and repair responses to genotoxic stress. Promotes efficient DNA repair by dephosphorylating H2AX, promoting the recruitment of DNA repair complexes containing MDC1. Its function as histone phosphatase probably explains its role in transcription regulation during organogenesis. May be involved in development of the eye. This chain is Protein phosphatase EYA4 (EYA4), found in Homo sapiens (Human).